The sequence spans 190 residues: Peptidyl-tRNA hydrolase (190 aa).

Tyrosine 19 contacts tRNA. Histidine 24 acts as the Proton acceptor in catalysis. Residues tyrosine 72, asparagine 74, and asparagine 121 each coordinate tRNA.

It belongs to the PTH family.

The protein resides in the mitochondrion. The catalysed reaction is an N-acyl-L-alpha-aminoacyl-tRNA + H2O = an N-acyl-L-amino acid + a tRNA + H(+). Functionally, peptidyl-tRNA hydrolase involved in the recycling of tRNA-Lys from diacetyl-lysyl-tRNA-Lys and is important for mitochondrial function. The polypeptide is Peptidyl-tRNA hydrolase (PTH1) (Saccharomyces cerevisiae (strain ATCC 204508 / S288c) (Baker's yeast)).